A 127-amino-acid chain; its full sequence is Protein FAM229A (127 aa).

A disordered region spans residues 1-96 (MLPSSTPGPG…ATEHNPVRPL (96 aa)). Residues 24-39 (RSPAARAPAAASSLGP) show a composition bias toward low complexity.

This sequence belongs to the FAM229 family.

This is Protein FAM229A (FAM229A) from Homo sapiens (Human).